The primary structure comprises 1103 residues: Voltage-dependent calcium channel subunit alpha-2/delta-1 (1103 aa).

An N-terminal signal peptide occupies residues 1 to 24 (MAAGCLLALTLTLFQSLLIGPSSE). Residues 25 to 1073 (EPFPSAVTIK…VLEDYTDCGG (1049 aa)) are Extracellular-facing. A glycan (N-linked (GlcNAc...) asparagine) is linked at N92. Residue S119 is modified to Phosphoserine. N-linked (GlcNAc...) asparagine glycosylation is found at N136 and N184. In terms of domain architecture, VWFA spans 253–430 (DMLILVDVSG…INTQEYLDVL (178 aa)). Positions 259, 261, and 263 each coordinate a divalent metal cation. Residues 259 to 263 (DVSGS) carry the MIDAS-like motif motif. 13 N-linked (GlcNAc...) asparagine glycosylation sites follow: N324, N348, N468, N475, N604, N613, N675, N781, N824, N888, N895, N985, and N998. C404 and C1059 are joined by a disulfide. Residues 446–556 (WTNVYLDALE…NIQNPKSQEP (111 aa)) form the Cache domain. A helical membrane pass occupies residues 1074–1094 (VSGLNPSLWYIIGIQFLLLWL). Topologically, residues 1095 to 1103 (VSGSTHRLL) are cytoplasmic.

It belongs to the calcium channel subunit alpha-2/delta family. Dimer formed of alpha-2-1 and delta-1 chains; disulfide-linked. Voltage-dependent calcium channels are multisubunit complexes, consisting of alpha-1 (CACNA1), alpha-2 (CACNA2D), beta (CACNB) and delta (CACNA2D) subunits in a 1:1:1:1 ratio. Post-translationally, proteolytically processed into subunits alpha-2-1 and delta-1 that are disulfide-linked. Isoform 1 is expressed in skeletal muscle. Isoform 2 is expressed in the central nervous system. Isoform 2, isoform 4 and isoform 5 are expressed in neuroblastoma cells. Isoform 3, isoform 4 and isoform 5 are expressed in the aorta.

It is found in the membrane. It localises to the cell membrane. The alpha-2/delta subunit of voltage-dependent calcium channels regulates calcium current density and activation/inactivation kinetics of the calcium channel. Plays an important role in excitation-contraction coupling. In Homo sapiens (Human), this protein is Voltage-dependent calcium channel subunit alpha-2/delta-1 (CACNA2D1).